Reading from the N-terminus, the 412-residue chain is Maltoporin (412 aa).

Residues 1-22 form the signal peptide; that stretch reads MKKVSVIAAAVAATLAAGSAFA.

This sequence belongs to the porin LamB (TC 1.B.3) family. As to quaternary structure, homotrimer formed of three 18-stranded antiparallel beta-barrels, containing three independent channels.

Its subcellular location is the cell outer membrane. The catalysed reaction is beta-maltose(in) = beta-maltose(out). Involved in the transport of maltose and maltodextrins. The protein is Maltoporin of Vibrio cholerae serotype O1 (strain ATCC 39315 / El Tor Inaba N16961).